We begin with the raw amino-acid sequence, 145 residues long: Transcriptional anti-antiactivator ExsC (145 aa).

In terms of assembly, homodimer. Interacts with ExsE. Interacts directly with ExsD to form a heterotetrameric complex.

It localises to the cytoplasm. Its activity is regulated as follows. In the absence of inducing signals, ExsE interacts with and inhibits ExsC activity. Part of the regulatory cascade that plays a role in the transcriptional regulation of the type III secretion system (T3SS). Interacts with antiactivator ExsD to inhibit its activity leading to ExsA-mediated transcription. The sequence is that of Transcriptional anti-antiactivator ExsC (exsC) from Pseudomonas aeruginosa (strain ATCC 15692 / DSM 22644 / CIP 104116 / JCM 14847 / LMG 12228 / 1C / PRS 101 / PAO1).